Here is a 246-residue protein sequence, read N- to C-terminus: UL16-binding protein 6 (246 aa).

The first 25 residues, 1–25, serve as a signal peptide directing secretion; sequence MAAAAIPALLLCLPLLFLLFGWSRA. The segment at 29 to 117 is MHC class I alpha-1 like; it reads DPHSLCYDIT…IQLENYTPKE (89 aa). The cysteines at positions 50 and 66 are disulfide-linked. N-linked (GlcNAc...) asparagine glycosylation is found at Asn68 and Asn82. Positions 118–210 are MHC class I alpha-2 like; sequence PLTLQARMSC…MDSTLEPSAG (93 aa). Residues Cys127 and Cys190 are joined by a disulfide bond. Gly218 carries the GPI-anchor amidated glycine lipid modification. A propeptide spans 219–246 (removed in mature form); the sequence is TTQLRATATTLILCCLLIILPCFILPGI.

The protein belongs to the MHC class I family. Interacts with KLRK1/NKG2D. As to quaternary structure, (Microbial infection) In CMV-infected cells, interacts with the viral glycoprotein UL16; this interaction causes relocalization from the cell surface to the cytoplasm and prevents binding to and activation of KLRK1/NKG2D, providing CMV with an immune evasion mechanism. Widely expressed. Expressed in trachea. Constitutively expressed in peripheral blood mononuclear cells, including B-cells and natural killer cells, as well as CD4+ and CD8+ T-cells and monocytes. Tends to be up-regulated in various lymphoid malignancies, including chronic lymphocytic leukemia.

The protein resides in the cell membrane. The protein localises to the endoplasmic reticulum. Its function is as follows. Binds and activates the KLRK1/NKG2D receptor, mediating natural killer cell cytotoxicity. This is UL16-binding protein 6 (RAET1L) from Homo sapiens (Human).